A 106-amino-acid polypeptide reads, in one-letter code: Small ribosomal subunit protein bS20 (106 aa).

A disordered region spans residues 1–32; it reads MAQKKPKRNLSALKRHRQSLKRRLRNKAKKSA.

Part of the 30S ribosomal subunit.

Its function is as follows. One of the primary rRNA binding proteins, it binds directly to 16S rRNA where it nucleates assembly of the bottom of the body of the 30S subunit, by binding to several RNA helices of the 16S rRNA. This Thermus thermophilus (strain ATCC 27634 / DSM 579 / HB8) protein is Small ribosomal subunit protein bS20 (rpsT).